Reading from the N-terminus, the 397-residue chain is Na(+)/H(+) antiporter NhaA 2 (397 aa).

The next 11 helical transmembrane spans lie at 9–29 (LHNP…AMAV), 59–79 (LLLW…GLEL), 95–115 (ILPV…YTLI), 125–145 (GWAI…ALLG), 154–174 (LFLL…IAFF), 177–197 (SELS…LILM), 222–242 (SGVH…LKGE), 260–280 (VVGL…SLQG), 292–312 (LGIA…FVWL), 332–352 (GVAL…SLAF), and 371–391 (LGIL…LRFS).

Belongs to the NhaA Na(+)/H(+) (TC 2.A.33) antiporter family.

It is found in the cell inner membrane. It carries out the reaction Na(+)(in) + 2 H(+)(out) = Na(+)(out) + 2 H(+)(in). In terms of biological role, na(+)/H(+) antiporter that extrudes sodium in exchange for external protons. In Magnetococcus marinus (strain ATCC BAA-1437 / JCM 17883 / MC-1), this protein is Na(+)/H(+) antiporter NhaA 2.